We begin with the raw amino-acid sequence, 611 residues long: Alkyldihydroxyacetonephosphate synthase (611 aa).

The region spanning Val-137–Val-317 is the FAD-binding PCMH-type domain. FAD is bound by residues Pro-169–Asn-175, Asp-237–Thr-243, Thr-250–His-255, and Glu-301–Ile-307. Arg-447 serves as a coordination point for substrate. The active-site Proton donor/acceptor is Tyr-508. Positions His-544–His-546 are important for enzyme activity. The Microbody targeting signal signature appears at Pro-609–Leu-611.

It belongs to the FAD-binding oxidoreductase/transferase type 4 family. In terms of assembly, homodimer. The cofactor is FAD.

It localises to the peroxisome. It carries out the reaction a long chain fatty alcohol + a 1-acylglycerone 3-phosphate = a 1-O-alkylglycerone 3-phosphate + a long-chain fatty acid + H(+). The protein operates within glycerolipid metabolism; ether lipid biosynthesis. In terms of biological role, catalyzes the exchange of an acyl for a long-chain alkyl group and the formation of the ether bond in the biosynthesis of ether phospholipids. The sequence is that of Alkyldihydroxyacetonephosphate synthase (eapA) from Dictyostelium discoideum (Social amoeba).